The following is a 443-amino-acid chain: Putative cytochrome bd menaquinol oxidase subunit I (443 aa).

9 consecutive transmembrane segments (helical) span residues 19 to 39 (IIFA…ELIY), 60 to 80 (VLLG…ALLW), 93 to 113 (LPFQ…SIYV), 125 to 145 (IVAV…ITNV), 176 to 196 (FFIT…FIVA), 219 to 239 (ALLL…LNGH), 322 to 342 (LFNA…IGVV), 357 to 377 (LIIF…GWIF), and 405 to 425 (VLFL…VYVL). Position 182 (histidine 182) interacts with heme b.

Belongs to the cytochrome ubiquinol oxidase subunit 1 family. The cofactor is heme b.

The protein localises to the cell membrane. In terms of biological role, may have a role in sporulation. Can compensate for the loss of cytochrome aa3. The protein is Putative cytochrome bd menaquinol oxidase subunit I (ythA) of Bacillus subtilis (strain 168).